Reading from the N-terminus, the 77-residue chain is Conotoxin VnMEKL-0223 (77 aa).

A signal peptide spans 1–19; the sequence is MQKLTILLLVAAVLMSTQA. A propeptide spanning residues 20–37 is cleaved from the precursor; that stretch reads LIKGGGEKRPKEKIKFLS. Cystine bridges form between C51–C65, C58–C69, and C64–C74.

This sequence belongs to the conotoxin O2 superfamily. In terms of tissue distribution, expressed by the venom duct.

The protein resides in the secreted. This chain is Conotoxin VnMEKL-0223, found in Conus ventricosus (Mediterranean cone).